Consider the following 309-residue polypeptide: Ribosomal protein L11 methyltransferase (309 aa).

S-adenosyl-L-methionine-binding residues include Thr-152, Gly-178, Asp-200, and Asn-242.

This sequence belongs to the methyltransferase superfamily. PrmA family.

It is found in the cytoplasm. It catalyses the reaction L-lysyl-[protein] + 3 S-adenosyl-L-methionine = N(6),N(6),N(6)-trimethyl-L-lysyl-[protein] + 3 S-adenosyl-L-homocysteine + 3 H(+). Functionally, methylates ribosomal protein L11. This is Ribosomal protein L11 methyltransferase from Pelobacter propionicus (strain DSM 2379 / NBRC 103807 / OttBd1).